A 507-amino-acid polypeptide reads, in one-letter code: ATP synthase subunit alpha, chloroplastic (507 aa).

Residue 170-177 coordinates ATP; that stretch reads GDRQTGKT.

The protein belongs to the ATPase alpha/beta chains family. F-type ATPases have 2 components, CF(1) - the catalytic core - and CF(0) - the membrane proton channel. CF(1) has five subunits: alpha(3), beta(3), gamma(1), delta(1), epsilon(1). CF(0) has four main subunits: a, b, b' and c.

Its subcellular location is the plastid. The protein localises to the chloroplast thylakoid membrane. The catalysed reaction is ATP + H2O + 4 H(+)(in) = ADP + phosphate + 5 H(+)(out). Its function is as follows. Produces ATP from ADP in the presence of a proton gradient across the membrane. The alpha chain is a regulatory subunit. This Drimys granadensis protein is ATP synthase subunit alpha, chloroplastic.